The sequence spans 1276 residues: cGMP-specific 3',5'-cyclic phosphodiesterase (1276 aa).

3 disordered regions span residues 1–76 (MHEL…TAAG), 91–185 (NQVK…QQDV), and 241–260 (ASPTVQQKSPRSLSNSSASS). Composition is skewed to low complexity over residues 12–47 (SSSSSSSSSSNMTDVSAAAGGATAPAETAATSSSAS) and 57–76 (TSTAMAAPTTTPTTAATAAG). The segment covering 109 to 124 (APYPPVPAAKPKPTPT) has biased composition (pro residues). Basic and acidic residues predominate over residues 129-140 (SKFKSTSREVDV). Over residues 147-166 (ARSSTISPGVSIHTQTIQQE) the composition is skewed to polar residues. 2 stretches are compositionally biased toward low complexity: residues 167–180 (SSSAKPGMSSSSSS) and 249–260 (SPRSLSNSSASS). GAF domains follow at residues 290 to 442 (DIDV…GIGI) and 474 to 658 (NLEC…GLGI). Positions 688–1119 (SQDQTEKLTQ…RNWQDLAEKV (432 aa)) constitute a PDEase domain. H764 functions as the Proton donor in the catalytic mechanism. 4 residues coordinate a divalent metal cation: H768, H804, D805, and D1023. Disordered stretches follow at residues 1162–1193 (AQHGAGAGGDDSHTPEHQRSGSRLSMKKTGAL) and 1205–1276 (LYNS…CSLL). 2 stretches are compositionally biased toward basic and acidic residues: residues 1171 to 1180 (DDSHTPEHQR) and 1221 to 1233 (LESHVSEDMDDKS). A compositionally biased stretch (low complexity) spans 1248–1263 (GRMSASSSTSSAGTVV). Positions 1266–1276 (SKKRSKLCSLL) are enriched in basic residues. C1273 carries the post-translational modification Cysteine methyl ester. The S-farnesyl cysteine moiety is linked to residue C1273. Positions 1274–1276 (SLL) are cleaved as a propeptide — removed in mature form.

It belongs to the cyclic nucleotide phosphodiesterase family. Interacts with PrBP. The cofactor is a divalent metal cation.

Its subcellular location is the cell membrane. It carries out the reaction 3',5'-cyclic GMP + H2O = GMP + H(+). Its function is as follows. Has a role regulating cGMP transport in Malpighian tubule principal cells. The sequence is that of cGMP-specific 3',5'-cyclic phosphodiesterase from Drosophila persimilis (Fruit fly).